Here is a 749-residue protein sequence, read N- to C-terminus: Protein SEY1 homolog 2 (749 aa).

Residues 1 to 671 (MIKNYGDRYH…QKHKQDFLQN (671 aa)) lie on the Cytoplasmic side of the membrane. Residues 40–265 (GKNYNIVSII…YEKNVRWSDM (226 aa)) form the GB1/RHD3-type G domain. 50–57 (GSQSTGKS) lines the GTP pocket. The stretch at 445-465 (NQLKAFVEAQLATFKQQLDNI) forms a coiled coil. Residues 672 to 692 (IPKPFWFLLLFFMYDDVLRWM) form a helical membrane-spanning segment. Residues 693-695 (GNP) lie on the Lumenal side of the membrane. Residues 696 to 716 (LFLYPILIILCFVGFCIAIGL) form a helical membrane-spanning segment. Residues 717–749 (HSLPKLAFQWVFRTLNQAVIPIIFGGISKLKGS) are Cytoplasmic-facing.

It belongs to the TRAFAC class dynamin-like GTPase superfamily. GB1/RHD3 GTPase family. RHD3 subfamily.

The protein localises to the endoplasmic reticulum membrane. Functionally, probable GTP-binding protein that may be involved in cell development. The sequence is that of Protein SEY1 homolog 2 from Paramecium tetraurelia.